The sequence spans 569 residues: Dolichol kinase EVAN (569 aa).

Residues 1–22 (MKTTATSFVTGERVVVFVVVSR) lie on the Cytoplasmic side of the membrane. Residues 23-43 (ILLSLPLSLISHGFSLFLLSL) traverse the membrane as a helical segment. The Lumenal segment spans residues 44–67 (SAFLVEIRVETSPFLLSHFSSRRG). Residues 68 to 88 (ASSGILLGAVTLPSVMISKLV) form a helical membrane-spanning segment. Topologically, residues 89–108 (QLSRAISIHEAEQDELAHVT) are cytoplasmic. The chain crosses the membrane as a helical span at residues 109–129 (MQYWAASASCCAILIYLSVIM). The Lumenal segment spans residues 130–147 (SQVRKDESLSSSSIWLTR). A helical membrane pass occupies residues 148–168 (VSLTGTVLYGVACFVSLSMIS). Residues 169-178 (HTGLNTSLKM) lie on the Cytoplasmic side of the membrane. The chain crosses the membrane as a helical span at residues 179 to 199 (LWMLFHGLAAVKLIRHLLCTF). Over 200–207 (PSCASIGE) the chain is Lumenal. The chain crosses the membrane as a helical span at residues 208 to 228 (ALLVTSGLVLYFGDFLACTIA). Over 229-252 (KIFEKLIPVDLVSISYGIKRTETG) the chain is Cytoplasmic. The helical transmembrane segment at 253–273 (IIVQGLLLGLLLFPMVFRFVL) threads the bilayer. Over 274–296 (HIYESSLRKRDARQRNCSDAAKS) the chain is Lumenal. Asparagine 289 carries N-linked (GlcNAc...) asparagine glycosylation. The chain crosses the membrane as a helical span at residues 297–317 (VLFFVSLLFFMVVAVPSWMQF). Over 318 to 340 (VHDFNQHPFLWVLTFVFSEPLKR) the chain is Cytoplasmic. A helical membrane pass occupies residues 341-361 (LSLCIYWILLIVVSVSRFYNI). The Lumenal portion of the chain corresponds to 362-369 (SRSSKVER). A helical transmembrane segment spans residues 370-390 (ILLRKYYHLMAVLMFLPALVL). Over 391–393 (QPK) the chain is Cytoplasmic. Residues 394-414 (FLDLAFGAALAVFVALEIIRI) traverse the membrane as a helical segment. Residues 415-440 (WRIQPLGEPLHQFMNAFTDHRDSEHL) lie on the Lumenal side of the membrane. A helical transmembrane segment spans residues 441–461 (IVSHFSLLLGCALPIWMSSGF). Over 462-464 (NDR) the chain is Cytoplasmic. Residues 465–485 (ALSPFAGILSLGIGDTMASMV) form a helical membrane-spanning segment. Over 486-508 (GHKYGVLRWSKTGKKTVEGTAAG) the chain is Lumenal. The interval 487–503 (HKYGVLRWSKTGKKTVE) is CTP-binding. Residues 509 to 529 (ITSMMAVCFVLVPILASMGYI) traverse the membrane as a helical segment. Residues 530-548 (LSQGWWSLLVAVTATGMLE) lie on the Cytoplasmic side of the membrane. The chain crosses the membrane as a helical span at residues 549–569 (AYTAQLDNAFIPLVFYSLLCL).

It belongs to the polyprenol kinase family.

It is found in the endoplasmic reticulum membrane. It carries out the reaction a di-trans,poly-cis-dolichol + CTP = a di-trans,poly-cis-dolichyl phosphate + CDP + H(+). Essential for pollen development. Involved in protein N-glycosylation in the endoplasmic reticulum (ER), especially in the female gametophyte. Mediates pollen tube (PT) reception in synergids through protein glycosylation. The protein is Dolichol kinase EVAN of Arabidopsis thaliana (Mouse-ear cress).